The primary structure comprises 729 residues: Fatty acid oxidation complex subunit alpha (729 aa).

The enoyl-CoA hydratase/isomerase stretch occupies residues 1-189 (MLYKGDTLYL…KIGLVDGVVK (189 aa)). Position 296 (Asp296) interacts with substrate. Positions 311–729 (ETPKQAAVLG…ARPVGDLKTA (419 aa)) are 3-hydroxyacyl-CoA dehydrogenase. NAD(+)-binding positions include Met324, Asp343, 400–402 (VVE), Lys407, and Ser429. His450 functions as the For 3-hydroxyacyl-CoA dehydrogenase activity in the catalytic mechanism. Asn453 contacts NAD(+). Positions 500 and 660 each coordinate substrate. The tract at residues 708 to 729 (RHNEPYYPPVEPARPVGDLKTA) is disordered.

This sequence in the N-terminal section; belongs to the enoyl-CoA hydratase/isomerase family. The protein in the C-terminal section; belongs to the 3-hydroxyacyl-CoA dehydrogenase family. In terms of assembly, heterotetramer of two alpha chains (FadB) and two beta chains (FadA).

It carries out the reaction a (3S)-3-hydroxyacyl-CoA + NAD(+) = a 3-oxoacyl-CoA + NADH + H(+). It catalyses the reaction a (3S)-3-hydroxyacyl-CoA = a (2E)-enoyl-CoA + H2O. The enzyme catalyses a 4-saturated-(3S)-3-hydroxyacyl-CoA = a (3E)-enoyl-CoA + H2O. The catalysed reaction is (3S)-3-hydroxybutanoyl-CoA = (3R)-3-hydroxybutanoyl-CoA. It carries out the reaction a (3Z)-enoyl-CoA = a 4-saturated (2E)-enoyl-CoA. It catalyses the reaction a (3E)-enoyl-CoA = a 4-saturated (2E)-enoyl-CoA. It functions in the pathway lipid metabolism; fatty acid beta-oxidation. Functionally, involved in the aerobic and anaerobic degradation of long-chain fatty acids via beta-oxidation cycle. Catalyzes the formation of 3-oxoacyl-CoA from enoyl-CoA via L-3-hydroxyacyl-CoA. It can also use D-3-hydroxyacyl-CoA and cis-3-enoyl-CoA as substrate. In Escherichia coli (strain K12 / MC4100 / BW2952), this protein is Fatty acid oxidation complex subunit alpha.